The primary structure comprises 551 residues: Protein GZF3 (551 aa).

Residues 17 to 43 (DNVFEPKSSENLNSLNQSEEEGHIGRW) are disordered. Residues 131–155 (CKNCLTSTTPLWRRDEHGAMLCNAC) form a GATA-type zinc finger. Disordered regions lie at residues 212–260 (GRKA…SATK), 379–400 (LAPT…QIRS), and 467–490 (SISN…AKDL). The segment covering 228–239 (SQLLMGTSSTAK) has biased composition (polar residues). The segment covering 244–254 (PKTESKERSDS) has biased composition (basic and acidic residues). Over residues 388–400 (DSNPSEVPNQIRS) the composition is skewed to polar residues. Low complexity predominate over residues 467–477 (SISNSVSSSDV). Positions 478 to 490 (SGRKFENHPAKDL) are enriched in basic and acidic residues.

It is found in the nucleus. The protein is Protein GZF3 (GZF3) of Saccharomyces cerevisiae (strain ATCC 204508 / S288c) (Baker's yeast).